Consider the following 99-residue polypeptide: MKSIDPRHYDVIVSPVVTEKATMASEHNKVVFKVLSGATKPQIKEAVEKLFDVKVKSVNTLVRKGKSKSFRGTFGTQSDVKRAVVTLEEGHRIDVTTGL.

It belongs to the universal ribosomal protein uL23 family. As to quaternary structure, part of the 50S ribosomal subunit. Contacts protein L29, and trigger factor when it is bound to the ribosome.

Functionally, one of the early assembly proteins it binds 23S rRNA. One of the proteins that surrounds the polypeptide exit tunnel on the outside of the ribosome. Forms the main docking site for trigger factor binding to the ribosome. This is Large ribosomal subunit protein uL23 from Rhodopseudomonas palustris (strain BisB5).